Here is a 152-residue protein sequence, read N- to C-terminus: Superoxide dismutase [Cu-Zn] (152 aa).

Cu cation is bound by residues histidine 44, histidine 46, and histidine 61. Residues histidine 61, histidine 69, histidine 78, and aspartate 81 each coordinate Zn(2+). Residue histidine 118 coordinates Cu cation.

The protein belongs to the Cu-Zn superoxide dismutase family. In terms of assembly, homodimer. Cu cation is required as a cofactor. Zn(2+) serves as cofactor.

It localises to the cytoplasm. The enzyme catalyses 2 superoxide + 2 H(+) = H2O2 + O2. Its function is as follows. Destroys radicals which are normally produced within the cells and which are toxic to biological systems. This is Superoxide dismutase [Cu-Zn] from Drosophila pseudoobscura pseudoobscura (Fruit fly).